We begin with the raw amino-acid sequence, 540 residues long: MAKDIKFSENARRSLLKGVDKLADTVKTTIGPKGRNVVLEQSYGNPDITNDGVTIAKSIELKDRYENMGAKLVAEAAQKTNDIAGDGTTTATVLTQAIVREGMKNVTAGANPVGIRRGIEKATKAAVDELHKISHKVESKDQIANVAAVSSASKEVGALIADAMEKVGHDGVITIEDSRGINTELSVVEGMQFDRGYLSQYMVTDNDKMEADLDNPYILITDKKISNIQDILPLLQEIVQQGKSLLIIADDITGEALPTLVLNKIRGTFNVVAVKAPGFGDRRKAQLQDIAALTGGTVITEDLGLELKDTKIDQLGQARRITVTKDSTTIVDGAGSKEAIDERVDTIRKQIEDSTSDFDKKKLQERLAKLTGGVAVIHVGAATETELKERRYRIEDALNSTRAAVDEGYVAGGGTALVNVEKAVREVKGETTDEQTGINIVLRALSAPVRQIAENAGKDGSVILDKLEHQENEIGYNAATDKWENMVDAGIIDPTKVTRTALQNAASIAALLLTTEAVVAEIPEPKQSAPQGGAGAPMGM.

ATP is bound by residues 29–32, 86–90, G413, 477–479, and D493; these read TIGP, DGTTT, and NAA.

It belongs to the chaperonin (HSP60) family. In terms of assembly, forms a cylinder of 14 subunits composed of two heptameric rings stacked back-to-back. Interacts with the co-chaperonin GroES.

The protein localises to the cytoplasm. It carries out the reaction ATP + H2O + a folded polypeptide = ADP + phosphate + an unfolded polypeptide.. Its function is as follows. Together with its co-chaperonin GroES, plays an essential role in assisting protein folding. The GroEL-GroES system forms a nano-cage that allows encapsulation of the non-native substrate proteins and provides a physical environment optimized to promote and accelerate protein folding. The sequence is that of Chaperonin GroEL from Lactobacillus helveticus (strain DPC 4571).